A 581-amino-acid polypeptide reads, in one-letter code: Tail sheath protein (581 aa).

The protein belongs to the myoviridae tail sheath protein family. As to quaternary structure, homomultimer.

It is found in the virion. The protein localises to the host cytoplasm. In terms of biological role, polymerizes as an extended structure around the baseplate-tail tube complex. During ejection, the sheath shifts to a contracted form, thereby making the inner tail tube protrude through the host cell envelope. The sequence is that of Tail sheath protein from Mycobacterium phage Bxz1 (Mycobacteriophage Bxz1).